The primary structure comprises 318 residues: Aspartate carbamoyltransferase catalytic subunit (318 aa).

Residues arginine 57 and threonine 58 each contribute to the carbamoyl phosphate site. Lysine 85 serves as a coordination point for L-aspartate. Positions 107, 141, and 144 each coordinate carbamoyl phosphate. L-aspartate is bound by residues arginine 174 and arginine 228. Glycine 269 and proline 270 together coordinate carbamoyl phosphate.

The protein belongs to the aspartate/ornithine carbamoyltransferase superfamily. ATCase family. Heterododecamer (2C3:3R2) of six catalytic PyrB chains organized as two trimers (C3), and six regulatory PyrI chains organized as three dimers (R2).

The enzyme catalyses carbamoyl phosphate + L-aspartate = N-carbamoyl-L-aspartate + phosphate + H(+). It participates in pyrimidine metabolism; UMP biosynthesis via de novo pathway; (S)-dihydroorotate from bicarbonate: step 2/3. Its function is as follows. Catalyzes the condensation of carbamoyl phosphate and aspartate to form carbamoyl aspartate and inorganic phosphate, the committed step in the de novo pyrimidine nucleotide biosynthesis pathway. The sequence is that of Aspartate carbamoyltransferase catalytic subunit from Mycolicibacterium smegmatis (strain ATCC 700084 / mc(2)155) (Mycobacterium smegmatis).